Reading from the N-terminus, the 171-residue chain is Small ribosomal subunit protein uS5 (171 aa).

One can recognise an S5 DRBM domain in the interval 14–77 (LKEKLVMVNR…EKAKKKLLKI (64 aa)).

The protein belongs to the universal ribosomal protein uS5 family. Part of the 30S ribosomal subunit. Contacts proteins S4 and S8.

Functionally, with S4 and S12 plays an important role in translational accuracy. Its function is as follows. Located at the back of the 30S subunit body where it stabilizes the conformation of the head with respect to the body. The sequence is that of Small ribosomal subunit protein uS5 from Karelsulcia muelleri (strain GWSS) (Sulcia muelleri).